The primary structure comprises 173 residues: Translation initiation factor IF-3 (173 aa).

The protein belongs to the IF-3 family. As to quaternary structure, monomer.

The protein localises to the cytoplasm. Its function is as follows. IF-3 binds to the 30S ribosomal subunit and shifts the equilibrium between 70S ribosomes and their 50S and 30S subunits in favor of the free subunits, thus enhancing the availability of 30S subunits on which protein synthesis initiation begins. The protein is Translation initiation factor IF-3 of Methylorubrum extorquens (strain CM4 / NCIMB 13688) (Methylobacterium extorquens).